The chain runs to 413 residues: DNA polymerase IV 1 (413 aa).

Residues 7–188 (IFHVDMNSFY…LPIEEMYGIG (182 aa)) enclose the UmuC domain. Positions 11 and 107 each coordinate Mg(2+). Glutamate 108 is an active-site residue.

Belongs to the DNA polymerase type-Y family. Monomer. Mg(2+) serves as cofactor.

The protein resides in the cytoplasm. It carries out the reaction DNA(n) + a 2'-deoxyribonucleoside 5'-triphosphate = DNA(n+1) + diphosphate. In terms of biological role, poorly processive, error-prone DNA polymerase involved in untargeted mutagenesis. Copies undamaged DNA at stalled replication forks, which arise in vivo from mismatched or misaligned primer ends. These misaligned primers can be extended by PolIV. Exhibits no 3'-5' exonuclease (proofreading) activity. May be involved in translesional synthesis, in conjunction with the beta clamp from PolIII. This is DNA polymerase IV 1 (dinB1) from Halalkalibacterium halodurans (strain ATCC BAA-125 / DSM 18197 / FERM 7344 / JCM 9153 / C-125) (Bacillus halodurans).